The chain runs to 252 residues: Probable transcriptional regulatory protein Lxx10750 (252 aa).

The protein belongs to the TACO1 family.

It is found in the cytoplasm. The sequence is that of Probable transcriptional regulatory protein Lxx10750 from Leifsonia xyli subsp. xyli (strain CTCB07).